A 236-amino-acid polypeptide reads, in one-letter code: MNMMDANEIIAFIQKSEKKTPVKVYVKGNLEGIDFGASSKAFITGPTGVVFGEWKEIEPVLAANADKIEDYVVESDRRNSAIPLLDTKGIQARIEPGAIIRDQVTIGNNAVIMMGASINIGAVIGEGTMIDMNVVVGGRGTIGKNCHIGAGSVIAGVIEPPSAQPVVVEDDVVIGANAVILEGVRVGKGAVVAAGAVVIEDVPPYVVVAGTPARVIKQIDEKTRSKTEIKQELRQL.

This sequence belongs to the transferase hexapeptide repeat family. DapH subfamily.

The catalysed reaction is (S)-2,3,4,5-tetrahydrodipicolinate + acetyl-CoA + H2O = L-2-acetamido-6-oxoheptanedioate + CoA. The protein operates within amino-acid biosynthesis; L-lysine biosynthesis via DAP pathway; LL-2,6-diaminopimelate from (S)-tetrahydrodipicolinate (acetylase route): step 1/3. Catalyzes the transfer of an acetyl group from acetyl-CoA to tetrahydrodipicolinate. In Brevibacillus brevis (strain 47 / JCM 6285 / NBRC 100599), this protein is 2,3,4,5-tetrahydropyridine-2,6-dicarboxylate N-acetyltransferase.